A 450-amino-acid chain; its full sequence is Tripartite motif-containing protein 64C (450 aa).

The RING-type zinc finger occupies 15 to 56 (CCICVNYFIDPVTTDCVHSFCRPCLCLCSEEGRAPMRCPLCR). The B box-type zinc-finger motif lies at 87 to 128 (SSDNICVLHEETKELFCEADKRLLCGPCSESPEHMAHSHSPI). Zn(2+)-binding residues include Cys92, His95, Cys114, and His120. A coiled-coil region spans residues 191–218 (DEEEQRHLQALEREAKELFQQLQDSQVR). Residues 269 to 450 (ELTSWCITGV…LRPFFCFGCT (182 aa)) form the B30.2/SPRY domain.

Belongs to the TRIM/RBCC family.

This Homo sapiens (Human) protein is Tripartite motif-containing protein 64C (TRIM64C).